Here is a 578-residue protein sequence, read N- to C-terminus: Phenylalanine--tRNA ligase beta subunit (578 aa).

A B5 domain is found at 292–370; it reads FDTDEKSVSH…RAYGFDNLEP (79 aa). Mg(2+) is bound by residues Asp-348, Asp-354, Asp-357, and Asp-358.

Belongs to the phenylalanyl-tRNA synthetase beta subunit family. Type 2 subfamily. As to quaternary structure, tetramer of two alpha and two beta subunits. Mg(2+) is required as a cofactor.

It is found in the cytoplasm. It catalyses the reaction tRNA(Phe) + L-phenylalanine + ATP = L-phenylalanyl-tRNA(Phe) + AMP + diphosphate + H(+). This Halorubrum lacusprofundi (strain ATCC 49239 / DSM 5036 / JCM 8891 / ACAM 34) protein is Phenylalanine--tRNA ligase beta subunit.